A 533-amino-acid polypeptide reads, in one-letter code: Frizzled/smoothened-like sans CRD protein H (533 aa).

An N-terminal signal peptide occupies residues 1-21 (MFIKFYFFIIFLILNFKNNYA). The Extracellular portion of the chain corresponds to 22 to 103 (SPTLLDSVLS…GDWTTMMDMS (82 aa)). Asparagine 76 carries N-linked (GlcNAc...) asparagine glycosylation. Residues 104-124 (LIVATISFFASIFLILTYSPL) form a helical membrane-spanning segment. The Cytoplasmic segment spans residues 125-134 (MNPSYNNRHT). The chain crosses the membrane as a helical span at residues 135-155 (IGILSMSFGIFLIMFTDMYNL). The Extracellular segment spans residues 156 to 177 (KKRFTLGCPSETRYAIQNDADC). A helical transmembrane segment spans residues 178–198 (LITGLIFQFGCVSAVFFWTAL). At 199-216 (SLDLYFQITNRNISRKYD) the chain is on the cytoplasmic side. Residues 217 to 237 (LYYFIGVNLISLIFTFVPVIS) form a helical membrane-spanning segment. The Extracellular portion of the chain corresponds to 238–259 (KSYGYGDFALGCWILDFNYALG). A helical transmembrane segment spans residues 260–280 (CFWIPLSVCLIFSTVVVLMIL). Over 281 to 302 (YEVYKIYKASNQKTSLKGHIKP) the chain is Cytoplasmic. The chain crosses the membrane as a helical span at residues 303–323 (LLCLISNCFEFFYVFGYSLYL). Topologically, residues 324-360 (ATKLTELHDNMDAYIKCLFLNSQNDPDSYTCPDHRLK) are extracellular. The helical transmembrane segment at 361–381 (LGPQFLFFLSLRLLGVSGIVF) threads the bilayer. The Cytoplasmic portion of the chain corresponds to 382–533 (YGTNSKVRKI…LTNINTIDNV (152 aa)). Residues 454 to 533 (IIVTPGGDDD…LTNINTIDNV (80 aa)) form a disordered region. A compositionally biased stretch (low complexity) spans 466 to 518 (NNNNNNNNNNNNNNNNNNNNNNNNNNNNNNNNNNNNNNNNNNNNNSNENNENN). Residues 501–528 (NNNNNNNNNNSNENNENNTQEIELTNIN) adopt a coiled-coil conformation. Residues 519–533 (TQEIELTNINTIDNV) show a composition bias toward polar residues.

This sequence belongs to the G-protein coupled receptor Fz/Smo family.

It localises to the membrane. This Dictyostelium discoideum (Social amoeba) protein is Frizzled/smoothened-like sans CRD protein H (fscH).